Here is a 410-residue protein sequence, read N- to C-terminus: 3-phosphoshikimate 1-carboxyvinyltransferase (410 aa).

3-phosphoshikimate-binding residues include K21, S22, and R26. K21 contributes to the phosphoenolpyruvate binding site. The phosphoenolpyruvate site is built by G69 and R97. Positions 143, 144, 145, 171, 288, and 315 each coordinate 3-phosphoshikimate. Q145 provides a ligand contact to phosphoenolpyruvate. D288 serves as the catalytic Proton acceptor. Positions 319, 364, and 389 each coordinate phosphoenolpyruvate.

It belongs to the EPSP synthase family. As to quaternary structure, monomer.

The protein localises to the cytoplasm. It catalyses the reaction 3-phosphoshikimate + phosphoenolpyruvate = 5-O-(1-carboxyvinyl)-3-phosphoshikimate + phosphate. It functions in the pathway metabolic intermediate biosynthesis; chorismate biosynthesis; chorismate from D-erythrose 4-phosphate and phosphoenolpyruvate: step 6/7. Catalyzes the transfer of the enolpyruvyl moiety of phosphoenolpyruvate (PEP) to the 5-hydroxyl of shikimate-3-phosphate (S3P) to produce enolpyruvyl shikimate-3-phosphate and inorganic phosphate. The sequence is that of 3-phosphoshikimate 1-carboxyvinyltransferase from Bacteroides fragilis (strain YCH46).